The primary structure comprises 57 residues: Small ribosomal subunit protein bS21 (57 aa).

Residues 32-42 (VRRREHYEKPS) show a composition bias toward basic and acidic residues. The segment at 32 to 57 (VRRREHYEKPSQRRKRKLEASRRRRR) is disordered. Over residues 43–57 (QRRKRKLEASRRRRR) the composition is skewed to basic residues.

Belongs to the bacterial ribosomal protein bS21 family.

This is Small ribosomal subunit protein bS21 from Synechococcus elongatus (strain ATCC 33912 / PCC 7942 / FACHB-805) (Anacystis nidulans R2).